Consider the following 308-residue polypeptide: Glycine-rich protein GRP33 (308 aa).

The KH domain maps to 83–118 (DQFPKYNFLGKLLGPGGSTMKQLQDETMTKISILGR). Gly residues-rich tracts occupy residues 203 to 220 (GPMG…GGFS) and 273 to 294 (RGAG…GGGK). Disordered regions lie at residues 203–222 (GPMG…FSGP) and 270–308 (SPGR…AAPY).

The arginines in the Gly-rich domain might be methylated.

The protein is Glycine-rich protein GRP33 of Artemia salina (Brine shrimp).